We begin with the raw amino-acid sequence, 122 residues long: Large ribosomal subunit protein uL14 (122 aa).

The protein belongs to the universal ribosomal protein uL14 family. Part of the 50S ribosomal subunit. Forms a cluster with proteins L3 and L19. In the 70S ribosome, L14 and L19 interact and together make contacts with the 16S rRNA in bridges B5 and B8.

Functionally, binds to 23S rRNA. Forms part of two intersubunit bridges in the 70S ribosome. The protein is Large ribosomal subunit protein uL14 of Caldicellulosiruptor saccharolyticus (strain ATCC 43494 / DSM 8903 / Tp8T 6331).